Consider the following 428-residue polypeptide: Spliceosome RNA helicase Ddx39b (428 aa).

Over residues 1 to 19 (MAENDVDNELLDYEDDEVE) the composition is skewed to acidic residues. A disordered region spans residues 1–31 (MAENDVDNELLDYEDDEVETAAGADGTEAPA). An N-acetylalanine modification is found at Ala-2. The residue at position 36 (Lys-36) is an N6-acetyllysine; alternate. Residue Lys-36 forms a Glycyl lysine isopeptide (Lys-Gly) (interchain with G-Cter in SUMO2); alternate linkage. A phosphoserine mark is found at Ser-38 and Ser-41. The Q motif motif lies at 45–73 (SGFRDFLLKPELLRAIVDCGFEHPSEVQH). Residues 76 to 249 (IPQAILGMDV…RKFMQDPMEI (174 aa)) enclose the Helicase ATP-binding domain. 89–96 (AKSGMGKT) lines the ATP pocket. Thr-172 is subject to Phosphothreonine. The DECD box signature appears at 196–199 (DECD). The region spanning 261-422 (GLQQYYVKLK…ELPDEIDISS (162 aa)) is the Helicase C-terminal domain.

This sequence belongs to the DEAD box helicase family. DECD subfamily. Homodimer, and heterodimer with DDX39A. DDX39B interacts with the THO subcomplex to form the THO-DDX39B complex which multimerizes into a 28-subunit tetrameric assembly. Component of the transcription/export (TREX) complex at least composed of ALYREF/THOC4, DDX39B, SARNP/CIP29, CHTOP and the THO subcomplex; in the complex interacts with THOC2. THOC1-THOC2-THOC3-DDX39B subcomplex is sufficient for the interaction with export factor NXF1-NXT1. TREX seems to have a dynamic structure involving ATP-dependent remodeling. Within the TREX complex bridges ALYREF/THOC4 and the THO subcomplex, and, in a ATP-dependent manner, ALYREF/THOC4 and SARNP/CIP29. Component of the spliceosome. Interacts directly with U2AF2. Interacts with RBM8A, RNPS1 and SRRM1, FYTTD1/UIF, THOC1, MX1 and POLDIP3. Interacts with LUZP4. Interacts with SARNP/CIP29 (via the C-terminal domain); the interaction is direct and facilitates RNA binding of DDX39B.

The protein localises to the nucleus. The protein resides in the nucleus speckle. It localises to the cytoplasm. The enzyme catalyses ATP + H2O = ADP + phosphate + H(+). In terms of biological role, involved in nuclear export of spliced and unspliced mRNA. Component of the TREX complex which is thought to couple mRNA transcription, processing and nuclear export, and specifically associates with spliced mRNA and not with unspliced pre-mRNA. The TREX complex is recruited to spliced mRNAs by a transcription-independent mechanism, binds to mRNA upstream of the exon-junction complex (EJC) and is recruited in a splicing- and cap-dependent manner to a region near the 5' end of the mRNA where it functions in mRNA export to the cytoplasm via the TAP/NXF1 pathway. The THOC1-THOC2-THOC3 core complex alone is sufficient to promote ATPase activity of DDX39B; in the complex THOC2 is the only component that directly interacts with DDX39B. Associates with SARNP/CIP29, which facilitates RNA binding of DDX39B and likely plays a role in mRNA export. May undergo several rounds of ATP hydrolysis during assembly of TREX to drive subsequent loading of components such as ALYREF/THOC4 and CHTOP onto mRNA. Also associates with pre-mRNA independent of ALYREF/THOC4. Involved in the nuclear export of intronless mRNA; the ATP-bound form is proposed to recruit export adapter ALYREF/THOC4 to intronless mRNA; its ATPase activity is cooperatively stimulated by RNA and ALYREF/THOC4 and ATP hydrolysis is thought to trigger the dissociation from RNA to allow the association of ALYREF/THOC4 and the NXF1-NXT1 heterodimer. Involved in transcription elongation and genome stability. Splice factor that is required for the first ATP-dependent step in spliceosome assembly and for the interaction of U2 snRNP with the branchpoint. Has both RNA-stimulated ATP binding/hydrolysis activity and ATP-dependent RNA unwinding activity. Even with the stimulation of RNA, the ATPase activity is weak. Can only hydrolyze ATP but not other NTPs. The RNA stimulation of ATPase activity does not have a strong preference for the sequence and length of the RNA. However, ssRNA stimulates the ATPase activity much more strongly than dsRNA. Can unwind 5' or 3' overhangs or blunt end RNA duplexes in vitro. The ATPase and helicase activities are not influenced by U2AF2; the effect of ALYREF/THOC4 is reported conflictingly. In Mus musculus (Mouse), this protein is Spliceosome RNA helicase Ddx39b (Ddx39b).